We begin with the raw amino-acid sequence, 184 residues long: ATP synthase subunit b 1 (184 aa).

The chain crosses the membrane as a helical span at residues Leu-4–Ser-24.

It belongs to the ATPase B chain family. In terms of assembly, F-type ATPases have 2 components, F(1) - the catalytic core - and F(0) - the membrane proton channel. F(1) has five subunits: alpha(3), beta(3), gamma(1), delta(1), epsilon(1). F(0) has three main subunits: a(1), b(2) and c(10-14). The alpha and beta chains form an alternating ring which encloses part of the gamma chain. F(1) is attached to F(0) by a central stalk formed by the gamma and epsilon chains, while a peripheral stalk is formed by the delta and b chains.

The protein resides in the cell inner membrane. In terms of biological role, f(1)F(0) ATP synthase produces ATP from ADP in the presence of a proton or sodium gradient. F-type ATPases consist of two structural domains, F(1) containing the extramembraneous catalytic core and F(0) containing the membrane proton channel, linked together by a central stalk and a peripheral stalk. During catalysis, ATP synthesis in the catalytic domain of F(1) is coupled via a rotary mechanism of the central stalk subunits to proton translocation. Functionally, component of the F(0) channel, it forms part of the peripheral stalk, linking F(1) to F(0). This chain is ATP synthase subunit b 1, found in Cereibacter sphaeroides (strain ATCC 17029 / ATH 2.4.9) (Rhodobacter sphaeroides).